The chain runs to 340 residues: Glyceraldehyde-3-phosphate dehydrogenase (340 aa).

NAD(+) is bound by residues 11 to 12 and G111; that span reads SI. 140–142 contributes to the D-glyceraldehyde 3-phosphate binding site; the sequence is SCN. The active-site Nucleophile is the C141. Residue R169 coordinates NAD(+). Residue 195-196 participates in D-glyceraldehyde 3-phosphate binding; sequence HG. Residue Q303 participates in NAD(+) binding.

The protein belongs to the glyceraldehyde-3-phosphate dehydrogenase family. As to quaternary structure, homotetramer.

It localises to the cytoplasm. It carries out the reaction D-glyceraldehyde 3-phosphate + phosphate + NADP(+) = (2R)-3-phospho-glyceroyl phosphate + NADPH + H(+). The enzyme catalyses D-glyceraldehyde 3-phosphate + phosphate + NAD(+) = (2R)-3-phospho-glyceroyl phosphate + NADH + H(+). It participates in carbohydrate degradation; glycolysis; pyruvate from D-glyceraldehyde 3-phosphate: step 1/5. In Methanococcus maripaludis (strain DSM 14266 / JCM 13030 / NBRC 101832 / S2 / LL), this protein is Glyceraldehyde-3-phosphate dehydrogenase.